The chain runs to 231 residues: S-norcoclaurine synthase 2 (231 aa).

107 to 109 (YKE) is a binding site for dopamine. Lys-121 (proton donor) is an active-site residue. (4-hydroxyphenyl)acetaldehyde is bound at residue Asp-140. Residues 210-230 (LLLCLIICLVIAGGMFVAGVP) traverse the membrane as a helical segment.

This sequence belongs to the BetVI family. In terms of tissue distribution, expressed in roots, stems and leaves. Detected in flower buds and germinating seeds. Low expression in carpels. Restricted to sieve elements of the phloem adjacent or proximal to laticifers.

It localises to the endoplasmic reticulum membrane. Its subcellular location is the vacuole membrane. It catalyses the reaction (4-hydroxyphenyl)acetaldehyde + dopamine = (S)-norcoclaurine + H2O. The protein operates within alkaloid biosynthesis; (S)-reticuline biosynthesis. Its activity is regulated as follows. Activity doubles within 5 hours of elicitor treatment and continues to increase for at least 80 hours. Its function is as follows. Involved in the biosynthesis of (S)-coclaurine, the common precursor of all benzylisoquinoline alkaloids such as morphine, sanguinarine, codeine or papaverine. Condenses dopamine and 4-hydroxyphenylacetaldehyde. In Papaver somniferum (Opium poppy), this protein is S-norcoclaurine synthase 2.